Consider the following 467-residue polypeptide: MTEVRLRFAPSPTGYLHVGGARTALFNWLLARKQKGTFILRIEDTDVARSTQESVDAILQGMEWLGLDWDEGPYYQSDRFPVYKEFVQKLLDSGKAYKCYCTPEELEAKREQALMDGRKPKYDGTCRELAGDVPGKPHVVRFRAPHEGVTAFDDLIKGRIAFNNDELDDLIIQRSDGTPTYNFVVVIDDATMGITTVIRGDDHVNNTPRQILLYEALGYPVPHFAHVPMILGADKARLSKRHGATGVMAYRDMGYLPEALVNYLVRLGWSFGDEEIFSKEDLIEKFSIEQVGRSAGVFNPDKLLWLNAHYIKTGDPSRLAGLLVPFLRERGVDPTGGPDLVAVVKTLQERSRTLLEMADGALFYFRRDFSYDEKAVEKFLTPEVSPLYELLIAKFASSADFTHQSIEQIFKEICEEKGLKLGQVAQPARIALCGGTVAPSIFEVMEVLGKEETNLRLEKALAFVRRG.

The 'HIGH' region motif lies at 10-20 (PSPTGYLHVGG). Positions 99, 101, 126, and 128 each coordinate Zn(2+). A 'KMSKS' region motif is present at residues 237 to 241 (RLSKR). K240 lines the ATP pocket.

It belongs to the class-I aminoacyl-tRNA synthetase family. Glutamate--tRNA ligase type 1 subfamily. Monomer. Zn(2+) serves as cofactor.

It is found in the cytoplasm. It carries out the reaction tRNA(Glu) + L-glutamate + ATP = L-glutamyl-tRNA(Glu) + AMP + diphosphate. Catalyzes the attachment of glutamate to tRNA(Glu) in a two-step reaction: glutamate is first activated by ATP to form Glu-AMP and then transferred to the acceptor end of tRNA(Glu). This is Glutamate--tRNA ligase from Geotalea uraniireducens (strain Rf4) (Geobacter uraniireducens).